The primary structure comprises 276 residues: Glutamate racemase (276 aa).

Substrate-binding positions include 10–11 (DS) and 42–43 (YG). The Proton donor/acceptor role is filled by Cys-73. 74-75 (NS) lines the substrate pocket. Cys-183 functions as the Proton donor/acceptor in the catalytic mechanism. 184-185 (TH) is a binding site for substrate.

It belongs to the aspartate/glutamate racemases family.

It catalyses the reaction L-glutamate = D-glutamate. It participates in cell wall biogenesis; peptidoglycan biosynthesis. Functionally, provides the (R)-glutamate required for cell wall biosynthesis. This is Glutamate racemase from Parafrankia sp. (strain EAN1pec).